A 257-amino-acid polypeptide reads, in one-letter code: Protein YIPF5 (257 aa).

The Cytoplasmic portion of the chain corresponds to 1 to 124 (MSGFENLNTD…KVADGSIMNE (124 aa)). Residues 75 to 106 (PASPQPFYGNNFEDEPPLLEELGINFDHIWQK) form an interaction with Sec23 region. Residues 125 to 145 (TDLAGPMVFCLAFGATLLLAG) traverse the membrane as a helical segment. Position 146 (lysine 146) is a topological domain, lumenal. Residues 147–167 (IQFGYVYGISAIGCLGMFCLL) traverse the membrane as a helical segment. Residues 168-173 (NLMSMT) are Cytoplasmic-facing. A helical transmembrane segment spans residues 174–194 (GVSFGCVASVLGYCLLPMILL). Residues 195–196 (SS) lie on the Lumenal side of the membrane. A helical membrane pass occupies residues 197–217 (FAVIFSLQGMVGIILTAGIIG). The Cytoplasmic portion of the chain corresponds to 218–236 (WCSFSASKIFISALAMEGQ). Residues 237–257 (QLLVAYPCALLYGVFALISVF) traverse the membrane as a helical segment.

This sequence belongs to the YIP1 family. As to quaternary structure, interacts with the COPII coat components Sec23 (SEC23A and/or SEC23B) and Sec24 (SEC24A and/or SEC24B). Interacts with YIF1A. May interact with RAB1A. Interacts with YIPF3 and YIPF4. As to expression, ubiquitously expressed with abundant expression in pancreatic tissue, islets, beta cells, and brain. Highly expressed in coronary smooth muscles.

The protein localises to the endoplasmic reticulum membrane. Its subcellular location is the golgi apparatus. It localises to the cis-Golgi network membrane. It is found in the cytoplasmic vesicle. The protein resides in the COPII-coated vesicle. Plays a role in transport between endoplasmic reticulum and Golgi. In pancreatic beta cells, required to transport proinsulin from endoplasmic reticulum into the Golgi. In Homo sapiens (Human), this protein is Protein YIPF5.